The primary structure comprises 561 residues: Asparagine synthetase [glutamine-hydrolyzing] (561 aa).

Residue Cys-2 is the For GATase activity of the active site. A Glutamine amidotransferase type-2 domain is found at 2-191 (CGIWALFGSD…PGHYEVLDLK (190 aa)). L-glutamine contacts are provided by residues 49-53 (RLAVV), 75-77 (NGE), and Asp-97. Positions 213–536 (HALYDNVEKL…PGRADWLSHY (324 aa)) constitute an Asparagine synthetase domain. Residues Leu-256, Ile-288, and 363-364 (SG) each bind ATP. N6-acetyllysine is present on Lys-385. Position 545 is a phosphothreonine (Thr-545). The residue at position 557 (Ser-557) is a Phosphoserine.

It carries out the reaction L-aspartate + L-glutamine + ATP + H2O = L-asparagine + L-glutamate + AMP + diphosphate + H(+). It participates in amino-acid biosynthesis; L-asparagine biosynthesis; L-asparagine from L-aspartate (L-Gln route): step 1/1. The chain is Asparagine synthetase [glutamine-hydrolyzing] (ASNS) from Pongo abelii (Sumatran orangutan).